The sequence spans 314 residues: MNKVEMTYSELIGNTSISNKQKVVMFTSEIKALIKIGIVNSNLITTIAGFLLAISFTSSSFMSNWGTFLLTIIGTALVIAGGCIVNNWYDVDIDPKMSRTKNRPTVTGFFSLKSVLTFGLLTTAVGLLLLMFTSWYATLFAFIGWFGYVVLYTIWSKRRYTLNTVIGSLSGAMPPLIGWAAISPSFHIVPFVMFLIMFIWQTPHFLALAMKKRDEYEAAGIPMLPVVRGMAVTKRQIIVYIACLLPLPFFLLPTMGITFAVIATLLNLGWLAIAFTGLFVDEDKKWANTIFIFSLNYLIILFPLMIIVKLPIFS.

8 helical membrane passes run 36–56 (IGIVNSNLITTIAGFLLAISF), 65–85 (WGTFLLTIIGTALVIAGGCIV), 114–134 (SVLTFGLLTTAVGLLLLMFTS), 135–155 (WYATLFAFIGWFGYVVLYTIW), 179–199 (WAAISPSFHIVPFVMFLIMFI), 237–257 (IIVYIACLLPLPFFLLPTMGI), 259–279 (FAVIATLLNLGWLAIAFTGLF), and 290–310 (IFIFSLNYLIILFPLMIIVKL).

Belongs to the UbiA prenyltransferase family. Protoheme IX farnesyltransferase subfamily. In terms of assembly, interacts with CtaA.

It is found in the cell membrane. The catalysed reaction is heme b + (2E,6E)-farnesyl diphosphate + H2O = Fe(II)-heme o + diphosphate. The protein operates within porphyrin-containing compound metabolism; heme O biosynthesis; heme O from protoheme: step 1/1. Converts heme B (protoheme IX) to heme O by substitution of the vinyl group on carbon 2 of heme B porphyrin ring with a hydroxyethyl farnesyl side group. In Oceanobacillus iheyensis (strain DSM 14371 / CIP 107618 / JCM 11309 / KCTC 3954 / HTE831), this protein is Protoheme IX farnesyltransferase.